The following is a 119-amino-acid chain: Ribonuclease P protein component (119 aa).

Positions 1–20 are disordered; sequence MLPAQHRMTRSTEFGATVSK.

Belongs to the RnpA family. Consists of a catalytic RNA component (M1 or rnpB) and a protein subunit.

The catalysed reaction is Endonucleolytic cleavage of RNA, removing 5'-extranucleotides from tRNA precursor.. Functionally, RNaseP catalyzes the removal of the 5'-leader sequence from pre-tRNA to produce the mature 5'-terminus. It can also cleave other RNA substrates such as 4.5S RNA. The protein component plays an auxiliary but essential role in vivo by binding to the 5'-leader sequence and broadening the substrate specificity of the ribozyme. The polypeptide is Ribonuclease P protein component (Mycolicibacterium vanbaalenii (strain DSM 7251 / JCM 13017 / BCRC 16820 / KCTC 9966 / NRRL B-24157 / PYR-1) (Mycobacterium vanbaalenii)).